A 57-amino-acid polypeptide reads, in one-letter code: Mambaquaretin-2 (57 aa).

The BPTI/Kunitz inhibitor domain maps to 5 to 55 (CNLPVKPGPCNGFFSAFYYSQKTNKCHSFTYGGCRGNANRFSTIEECRRTC). 3 disulfide bridges follow: Cys-5–Cys-55, Cys-14–Cys-38, and Cys-30–Cys-51.

The protein belongs to the venom Kunitz-type family. As to expression, expressed by the venom gland.

The protein localises to the secreted. Interacts with vasopressin V2 receptor (V2R/AVPR2), probably in a selective manner. Inhibits vasopressin binding human V2R in the nanomolar range (Ki=8.16 nM), and also moderately inhibits vasopressin-induced cAMP production (IC(50)=224 nM). In vivo, intraperitoneal injection of this protein into rats increases diuresis by 5.5-fold, without any loss of electrolytes. This Dendroaspis viridis (Western green mamba) protein is Mambaquaretin-2.